We begin with the raw amino-acid sequence, 680 residues long: Harmonin-binding protein USHBP1 (680 aa).

Basic residues predominate over residues 1 to 15 (MSARATRPRSRRGRH). Disordered stretches follow at residues 1–101 (MSAR…GPAE), 135–162 (PVEAEDRDPGAPGSFGNEEEASGPGQQE), and 217–250 (ASPPPSMLRAGRRNSNSSSSGAERRPWAPQDSPM). Residues 76 to 86 (PEERREPEVEA) are compositionally biased toward basic and acidic residues. Coiled-coil stretches lie at residues 177-219 (LGTR…EASP), 362-386 (ATNGDLQAAEKEASRLLVKKEVAMD), and 479-506 (LADLVLRLQLAQREKRGLELREAALRAQ). Residues 524–562 (LMGDGSSGGSSEDPSSEEEAGEDRQQHYQGPPALLGGQM) are disordered. A coiled-coil region spans residues 573–661 (QELSASLTRA…QQAEELAVLT (89 aa)).

It belongs to the MCC family. In terms of assembly, interacts via its C-terminus with the first PDZ domain of USH1C.

This is Harmonin-binding protein USHBP1 from Rattus norvegicus (Rat).